A 358-amino-acid chain; its full sequence is C-C chemokine receptor type 3 (358 aa).

Topologically, residues 1–43 are extracellular; it reads MATYPEEAELETEFPGTTFYDYEFAQPCFKVSITDLGAQFLPS. The helical transmembrane segment at 44–64 threads the bilayer; sequence LFSLVFIVGLLGNITVIVVLT. Over 65-74 the chain is Cytoplasmic; the sequence is KYQKLKIMTN. A helical membrane pass occupies residues 75 to 95; that stretch reads IYLLNLAISDLLFLFTLPFWT. The Extracellular portion of the chain corresponds to 96–112; the sequence is YYVHWNKWVFGHFMCKI. A helical membrane pass occupies residues 113–133; that stretch reads ISGLYYVGLFSEIFFIILLTI. Over 134–154 the chain is Cytoplasmic; that stretch reads DRYLAIVHAVFALRTRTVTFG. The chain crosses the membrane as a helical span at residues 155 to 175; it reads IITSVITWVLAVLAALPEFMF. Residues 176-206 lie on the Extracellular side of the membrane; that stretch reads YGTQGHFEVLFCGPSYPEKKEHHWKRFQALR. A helical membrane pass occupies residues 207–227; the sequence is MNIFGLALPLLIMIICYTGII. Over 228-243 the chain is Cytoplasmic; that stretch reads KTLLRCPSKKKYKAIR. The helical transmembrane segment at 244–264 threads the bilayer; that stretch reads LIFVIMVVFFVFWTPYNLLLL. Residues 265 to 287 are Extracellular-facing; sequence FSAFDLSFLDDCERSKQLDMAKH. Residues 288–308 form a helical membrane-spanning segment; that stretch reads VTEVIAHTHCCINPIIYAFVG. At 309–358 the chain is on the cytoplasmic side; sequence ERFQKYLRHFLHRNVTMHLSKYIPFFTSEKLERSSSISPSSGDPELSVVF.

Belongs to the G-protein coupled receptor 1 family.

It localises to the cell membrane. Its function is as follows. Receptor for C-C type chemokine. Binds and responds to a variety of chemokines, including CCL11, CCL26, CCL7, CCL13, RANTES(CCL5) and CCL15. Subsequently transduces a signal by increasing the intracellular calcium ions level. In addition acts as a possible functional receptor for NARS1. This is C-C chemokine receptor type 3 (CCR3) from Cavia porcellus (Guinea pig).